The following is a 466-amino-acid chain: Asparagine--tRNA ligase (466 aa).

This sequence belongs to the class-II aminoacyl-tRNA synthetase family. Homodimer.

It is found in the cytoplasm. It catalyses the reaction tRNA(Asn) + L-asparagine + ATP = L-asparaginyl-tRNA(Asn) + AMP + diphosphate + H(+). The sequence is that of Asparagine--tRNA ligase from Shewanella denitrificans (strain OS217 / ATCC BAA-1090 / DSM 15013).